We begin with the raw amino-acid sequence, 326 residues long: NADH-ubiquinone oxidoreductase chain 1 (326 aa).

The next 9 helical transmembrane spans lie at 1–21 (MFLLSLLIKIITIILPLLVAV), 41–61 (PNIVGVFGLLQPLADGLKLFV), 72–92 (IIIFILAPILTFLLALVSWCV), 104–124 (INIGVLYILAISSLGVYGIIT), 152–172 (IGLILINVLLCSGSLNFTEIV), 177–197 (SIWFVIPLFPIFIMFYISILA), 234–256 (YANMILMCSLTTILFFGGWLPPF), 268–288 (VWFGLKTTFLLFGFIWIRSSF), and 303–323 (ILLPLSLAWVFLISGILLSFN).

This sequence belongs to the complex I subunit 1 family.

The protein localises to the mitochondrion inner membrane. It carries out the reaction a ubiquinone + NADH + 5 H(+)(in) = a ubiquinol + NAD(+) + 4 H(+)(out). In terms of biological role, core subunit of the mitochondrial membrane respiratory chain NADH dehydrogenase (Complex I) that is believed to belong to the minimal assembly required for catalysis. Complex I functions in the transfer of electrons from NADH to the respiratory chain. The immediate electron acceptor for the enzyme is believed to be ubiquinone. This is NADH-ubiquinone oxidoreductase chain 1 (ND1) from Chondrus crispus (Carrageen Irish moss).